Here is a 580-residue protein sequence, read N- to C-terminus: PTS system fructose-specific EIIB'BC component (580 aa).

PTS EIIB type-2 domains follow at residues 1 to 99 and 120 to 215; these read MSSS…QLAA and IVAI…KALA. Cysteine 126 functions as the Phosphocysteine intermediate; for EIIB activity in the catalytic mechanism. Cysteine 126 carries the post-translational modification Phosphocysteine; by EIIA. Residues 243 to 580 enclose the PTS EIIC type-2 domain; that stretch reads AYKHLMTGVS…LKKPVADVIA (338 aa). The next 9 membrane-spanning stretches (helical) occupy residues 254 to 274, 289 to 309, 332 to 352, 369 to 389, 410 to 430, 451 to 471, 483 to 503, 509 to 529, and 549 to 571; these read MLPFVTAGGLLIALAFALGGI, LFQIGAKAGFTLMVPALAGYI, LNAGFLGGIIAGFIAGYGVAA, VLILPVLGTLLVGLAMMYVFG, SALLLGLLLGGMMAFDMGGPV, AAAMVAGMTPPLGIALATWVF, ATAAGVLGLAFVTEGAIPYAA, TIPALVIGSAVAGAISMTAGA, and HLLNYVLALVVGVVVTAVALRLL.

The protein localises to the cell inner membrane. The catalysed reaction is D-fructose(out) + N(pros)-phospho-L-histidyl-[protein] = D-fructose 1-phosphate(in) + L-histidyl-[protein]. Its function is as follows. The phosphoenolpyruvate-dependent sugar phosphotransferase system (sugar PTS), a major carbohydrate active transport system, catalyzes the phosphorylation of incoming sugar substrates concomitantly with their translocation across the cell membrane. The enzyme II FruAB PTS system is involved in fructose transport. The polypeptide is PTS system fructose-specific EIIB'BC component (Xanthomonas campestris pv. campestris (strain ATCC 33913 / DSM 3586 / NCPPB 528 / LMG 568 / P 25)).